The chain runs to 299 residues: GTPase Era (299 aa).

Positions 5 to 172 (RSGFISIIGR…KDLIFAKLPE (168 aa)) constitute an Era-type G domain. Positions 13–20 (GRPNVGKS) are G1. 13-20 (GRPNVGKS) serves as a coordination point for GTP. Residues 39–43 (QTTRN) are G2. The interval 60 to 63 (DTPG) is G3. Residues 60–64 (DTPGI) and 122–125 (NKMD) contribute to the GTP site. Positions 122-125 (NKMD) are G4. Residues 151–153 (VSA) are G5. A KH type-2 domain is found at 203 to 280 (TREEIPHSVA…YLELWVKVKK (78 aa)).

This sequence belongs to the TRAFAC class TrmE-Era-EngA-EngB-Septin-like GTPase superfamily. Era GTPase family. As to quaternary structure, monomer.

The protein resides in the cytoplasm. It is found in the cell membrane. Functionally, an essential GTPase that binds both GDP and GTP, with rapid nucleotide exchange. Plays a role in 16S rRNA processing and 30S ribosomal subunit biogenesis and possibly also in cell cycle regulation and energy metabolism. The sequence is that of GTPase Era from Heliobacterium modesticaldum (strain ATCC 51547 / Ice1).